Consider the following 564-residue polypeptide: Serine/threonine-protein kinase DBF20 (564 aa).

Phosphoserine is present on serine 17. A disordered region spans residues 24 to 62 (LNIPKPTSPQAQYRPARKSENGRLTPGLPRSYKPCDSDD). The Protein kinase domain maps to 169 to 469 (FQILTQVGQG…FEQVRKMSYF (301 aa)). ATP-binding positions include 175–183 (VGQGGYGQV) and lysine 198. Aspartate 292 (proton acceptor) is an active-site residue. Serine 366 is subject to Phosphoserine. In terms of domain architecture, AGC-kinase C-terminal spans 470–547 (AEINFETLRT…RHRDGKQGSS (78 aa)). A Phosphothreonine modification is found at threonine 536.

This sequence belongs to the protein kinase superfamily. Ser/Thr protein kinase family.

It catalyses the reaction L-seryl-[protein] + ATP = O-phospho-L-seryl-[protein] + ADP + H(+). The catalysed reaction is L-threonyl-[protein] + ATP = O-phospho-L-threonyl-[protein] + ADP + H(+). Is probably a Ser/Thr-protein kinase that may function in initiation of DNA synthesis and also in late nuclear division. In Saccharomyces cerevisiae (strain ATCC 204508 / S288c) (Baker's yeast), this protein is Serine/threonine-protein kinase DBF20 (DBF20).